A 434-amino-acid polypeptide reads, in one-letter code: 3-phosphoshikimate 1-carboxyvinyltransferase (434 aa).

The 3-phosphoshikimate site is built by Lys22, Ser23, and Arg27. Lys22 contacts phosphoenolpyruvate. Positions 93 and 121 each coordinate phosphoenolpyruvate. 3-phosphoshikimate is bound by residues Ser168, Ser169, Gln170, Ser199, Asp320, and Lys347. Gln170 is a phosphoenolpyruvate binding site. The active-site Proton acceptor is Asp320. Positions 351, 394, and 419 each coordinate phosphoenolpyruvate.

Belongs to the EPSP synthase family. In terms of assembly, monomer.

Its subcellular location is the cytoplasm. It carries out the reaction 3-phosphoshikimate + phosphoenolpyruvate = 5-O-(1-carboxyvinyl)-3-phosphoshikimate + phosphate. It functions in the pathway metabolic intermediate biosynthesis; chorismate biosynthesis; chorismate from D-erythrose 4-phosphate and phosphoenolpyruvate: step 6/7. Its function is as follows. Catalyzes the transfer of the enolpyruvyl moiety of phosphoenolpyruvate (PEP) to the 5-hydroxyl of shikimate-3-phosphate (S3P) to produce enolpyruvyl shikimate-3-phosphate and inorganic phosphate. In Burkholderia orbicola (strain AU 1054), this protein is 3-phosphoshikimate 1-carboxyvinyltransferase.